A 163-amino-acid chain; its full sequence is MIKFTHLVHHHHDEHHHGEEHTHNTAELTICLTMQERTKSRLKVMLSDGSEAGLFLPRGTVLKEHDIVESDDGVQAMITAAEETVSTVYSDDLLLLAKACYHLGNRHVPLQVEAGWCRYLHDHVLDDMVQRLGLNVKVEQAKYQPEPGAYGGSSAGSHDGHHH.

A disordered region spans residues 144–163; that stretch reads QPEPGAYGGSSAGSHDGHHH.

The protein belongs to the UreE family.

It is found in the cytoplasm. Involved in urease metallocenter assembly. Binds nickel. Probably functions as a nickel donor during metallocenter assembly. This is Urease accessory protein UreE from Aliivibrio fischeri (strain MJ11) (Vibrio fischeri).